The following is a 59-amino-acid chain: Large ribosomal subunit protein bL32 (59 aa).

The protein belongs to the bacterial ribosomal protein bL32 family.

This Desulfitobacterium hafniense (strain Y51) protein is Large ribosomal subunit protein bL32.